Reading from the N-terminus, the 204-residue chain is ATP phosphoribosyltransferase (204 aa).

This sequence belongs to the ATP phosphoribosyltransferase family. Short subfamily. In terms of assembly, heteromultimer composed of HisG and HisZ subunits.

It is found in the cytoplasm. The catalysed reaction is 1-(5-phospho-beta-D-ribosyl)-ATP + diphosphate = 5-phospho-alpha-D-ribose 1-diphosphate + ATP. It participates in amino-acid biosynthesis; L-histidine biosynthesis; L-histidine from 5-phospho-alpha-D-ribose 1-diphosphate: step 1/9. In terms of biological role, catalyzes the condensation of ATP and 5-phosphoribose 1-diphosphate to form N'-(5'-phosphoribosyl)-ATP (PR-ATP). Has a crucial role in the pathway because the rate of histidine biosynthesis seems to be controlled primarily by regulation of HisG enzymatic activity. This is ATP phosphoribosyltransferase from Campylobacter concisus (strain 13826).